Reading from the N-terminus, the 308-residue chain is D-alanine--D-alanine ligase (308 aa).

The ATP-grasp domain occupies 103 to 302 (KTVMATAGVP…FDELVQWMVE (200 aa)). 130–184 (MAPPYVIKPVADGSSVGVFIVTEDQAHPPQELFRDDWPHGEELLVEKYIAGRELT) lines the ATP pocket. Positions 252, 269, and 271 each coordinate Mg(2+).

Belongs to the D-alanine--D-alanine ligase family. Mg(2+) serves as cofactor. The cofactor is Mn(2+).

The protein localises to the cytoplasm. It carries out the reaction 2 D-alanine + ATP = D-alanyl-D-alanine + ADP + phosphate + H(+). Its pathway is cell wall biogenesis; peptidoglycan biosynthesis. Its function is as follows. Cell wall formation. The chain is D-alanine--D-alanine ligase from Afipia carboxidovorans (strain ATCC 49405 / DSM 1227 / KCTC 32145 / OM5) (Oligotropha carboxidovorans).